A 574-amino-acid chain; its full sequence is E3 ubiquitin-protein ligase NEURL1 (574 aa).

The segment covering 1–18 (MGNNFSSVSSLQRGNPSR) has biased composition (polar residues). The disordered stretch occupies residues 1-53 (MGNNFSSVSSLQRGNPSRASRGHPQNLKDSIGGSFPVPSHRCHHKQKHCPPTL). A lipid anchor (N-myristoyl glycine) is attached at glycine 2. NHR domains follow at residues 61–217 (TPLL…QLLD) and 292–447 (GDLR…RILG). The RING-type zinc finger occupies 520 to 560 (ECTICYEHAVDTVIYTCGHMCLCYSCGLRLKKALHACCPIC).

Interacts with CPEB3 (via N-terminal domain); the interaction increases CPEB3 ubiquitination. Interacts with DLL1. Myristoylation is a determinant of membrane targeting. As to expression, expressed in CA1 pyramidal neurons (at protein level). Expressed throughout the adult forebrain, including the cerebral cortex, amygdala, striatum, and CA1 area of the hippocampus. Expressed in sensory neurons of the olfactory epithelium, the vomeronasal organ, mammary gland and skeletal muscle.

The protein resides in the cytoplasm. It is found in the perinuclear region. It localises to the cell membrane. The protein localises to the perikaryon. Its subcellular location is the cell projection. The protein resides in the dendrite. It is found in the postsynaptic density. The enzyme catalyses S-ubiquitinyl-[E2 ubiquitin-conjugating enzyme]-L-cysteine + [acceptor protein]-L-lysine = [E2 ubiquitin-conjugating enzyme]-L-cysteine + N(6)-ubiquitinyl-[acceptor protein]-L-lysine.. The protein operates within protein modification; protein ubiquitination. In terms of biological role, plays a role in hippocampal-dependent synaptic plasticity, learning and memory. Involved in the formation of spines and functional synaptic contacts by modulating the translational activity of the cytoplasmic polyadenylation element-binding protein CPEB3. Promotes ubiquitination of CPEB3, and hence induces CPEB3-dependent mRNA translation activation of glutamate receptor GRIA1 and GRIA2. Can function as an E3 ubiquitin-protein ligase to activate monoubiquitination of JAG1 (in vitro), thereby regulating the Notch pathway. Acts as a tumor suppressor; inhibits malignant cell transformation of medulloblastoma (MB) cells by inhibiting the Notch signaling pathway. The polypeptide is E3 ubiquitin-protein ligase NEURL1 (Neurl1) (Mus musculus (Mouse)).